The primary structure comprises 388 residues: Non-structural maintenance of chromosome element 5 (388 aa).

As to quaternary structure, component of the smc5/smc6 complex which consists of two subcomplexes, smc5-smc6-nse2 and nse1-nse2-nse4. Interacts with nse6 and rfp1.

It is found in the cytoplasm. Its subcellular location is the nucleus. It localises to the chromosome. In terms of biological role, acts in a DNA repair pathway for removal of UV-induced DNA damage that is distinct from classical nucleotide excision repair and in repair of ionizing radiation damage. Functions in homologous recombination repair of DNA double strand breaks and in recovery of stalled replication forks. May prevent formation of excessive Holliday junctions or assist in their resolution. The protein is Non-structural maintenance of chromosome element 5 (nse5) of Schizosaccharomyces pombe (strain 972 / ATCC 24843) (Fission yeast).